We begin with the raw amino-acid sequence, 284 residues long: Ribose-phosphate pyrophosphokinase 1 (284 aa).

34–36 serves as a coordination point for ATP; it reads DGE. Mg(2+) contacts are provided by histidine 126 and aspartate 163. Lysine 186 is an active-site residue. Residues arginine 188, aspartate 211, and 215 to 219 contribute to the D-ribose 5-phosphate site; that span reads STGGT.

The protein belongs to the ribose-phosphate pyrophosphokinase family. Class III (archaeal) subfamily. The cofactor is Mg(2+).

It localises to the cytoplasm. It carries out the reaction D-ribose 5-phosphate + ATP = 5-phospho-alpha-D-ribose 1-diphosphate + AMP + H(+). It functions in the pathway metabolic intermediate biosynthesis; 5-phospho-alpha-D-ribose 1-diphosphate biosynthesis; 5-phospho-alpha-D-ribose 1-diphosphate from D-ribose 5-phosphate (route I): step 1/1. Involved in the biosynthesis of the central metabolite phospho-alpha-D-ribosyl-1-pyrophosphate (PRPP) via the transfer of pyrophosphoryl group from ATP to 1-hydroxyl of ribose-5-phosphate (Rib-5-P). This chain is Ribose-phosphate pyrophosphokinase 1, found in Archaeoglobus fulgidus (strain ATCC 49558 / DSM 4304 / JCM 9628 / NBRC 100126 / VC-16).